The primary structure comprises 673 residues: UvrABC system protein B (673 aa).

Residues 26–183 (EGLEDGLAHQ…RRLAELQYAR (158 aa)) form the Helicase ATP-binding domain. 39-46 (GVTGSGKT) is a binding site for ATP. Residues 92 to 115 (YYDYYQPEAYVPSSDTFIEKDASV) carry the Beta-hairpin motif. Residues 431-597 (QVDDLLSEIR…GLNKKVVDIL (167 aa)) enclose the Helicase C-terminal domain. The interval 608-627 (AKGRGKSRPIVEPDNVPMDM) is disordered. Positions 633-668 (QQKIHELEGLMMQHAQNLEFEEAAQIRDQLHLLREL) constitute a UVR domain.

Belongs to the UvrB family. In terms of assembly, forms a heterotetramer with UvrA during the search for lesions. Interacts with UvrC in an incision complex.

The protein localises to the cytoplasm. Its function is as follows. The UvrABC repair system catalyzes the recognition and processing of DNA lesions. A damage recognition complex composed of 2 UvrA and 2 UvrB subunits scans DNA for abnormalities. Upon binding of the UvrA(2)B(2) complex to a putative damaged site, the DNA wraps around one UvrB monomer. DNA wrap is dependent on ATP binding by UvrB and probably causes local melting of the DNA helix, facilitating insertion of UvrB beta-hairpin between the DNA strands. Then UvrB probes one DNA strand for the presence of a lesion. If a lesion is found the UvrA subunits dissociate and the UvrB-DNA preincision complex is formed. This complex is subsequently bound by UvrC and the second UvrB is released. If no lesion is found, the DNA wraps around the other UvrB subunit that will check the other stand for damage. The sequence is that of UvrABC system protein B from Escherichia coli O81 (strain ED1a).